The chain runs to 499 residues: Anaerobic magnesium-protoporphyrin IX monomethyl ester cyclase (499 aa).

The B12-binding domain maps to 9–145 (PHPAIGSRIP…AALENHNDLN (137 aa)). The region spanning 188 to 420 (YGGKQAVVIQ…PPWRIFLWVK (233 aa)) is the Radical SAM core domain. [4Fe-4S] cluster contacts are provided by Cys202, Cys206, and Cys209.

It belongs to the BchE family. [4Fe-4S] cluster serves as cofactor. The cofactor is adenosylcob(III)alamin.

It carries out the reaction Mg-protoporphyrin IX 13-monomethyl ester + 3 S-adenosyl-L-methionine + H2O = 3,8-divinyl protochlorophyllide a + 3 5'-deoxyadenosine + 3 L-methionine + 4 H(+). It functions in the pathway porphyrin-containing compound metabolism; bacteriochlorophyll biosynthesis (light-independent). Its function is as follows. Involved in the tetrapyrrole biosynthetic pathways leading to chlorophyll and bacteriochlorophyll (BChl). Catalyzes the anaerobic formation of the isocyclic ring (E-ring) in Mg-protoporphyrin monomethyl ester (MPE) to yield protochlorophyllide a (PChlide a) via a six-electron oxidation and the formation of an oxo group at position C13 using oxygen from a water molecule. The polypeptide is Anaerobic magnesium-protoporphyrin IX monomethyl ester cyclase (Synechocystis sp. (strain ATCC 27184 / PCC 6803 / Kazusa)).